Reading from the N-terminus, the 1391-residue chain is Leucine-rich PPR motif-containing protein, mitochondrial (1391 aa).

The N-terminal 42 residues, 1-42 (MSALLAGARFLLRPGLRALPAPCVRLSPGQGRYLNNTPGHFA), are a transit peptide targeting the mitochondrion. PPR repeat units follow at residues 110–144 (LLRS…GAVF), 145–179 (DVSH…NVQP), 180–214 (NRVT…DLPI), 215–249 (TEAV…GIEP), 250–284 (GPET…EGSL), 389–425 (NLHS…GMPV), 704–738 (AIGT…DSSA), 741–775 (DTSK…DVPL), 779–813 (TTTS…GLAK), 815–850 (TSNL…NCMP), 948–982 (RDDM…NVIP), 1028–1062 (PESS…GTAM), 1063–1093 (SASA…AENH), 1100–1134 (NDAA…DKVP), and 1310–1344 (RETA…SVSP). The tract at residues 1118–1387 (KDALASLKAM…KLKKDKADSY (270 aa)) is RNA-binding.

It localises to the mitochondrion. The protein localises to the nucleus. May play a role in RNA metabolism in both nuclei and mitochondria. May bind mature mRNA in the nucleus outer membrane. In mitochondria binds to poly(A) mRNA. May be involved in transcription regulation. Binds single-stranded DNA. The polypeptide is Leucine-rich PPR motif-containing protein, mitochondrial (lrpprc) (Xenopus tropicalis (Western clawed frog)).